Reading from the N-terminus, the 499-residue chain is Cobyric acid synthase (499 aa).

The GATase cobBQ-type domain occupies 251–442; that stretch reads SLDIAVVSLK…LHGVFDNLEW (192 aa). Residue Cys332 is the Nucleophile of the active site. His434 is a catalytic residue.

Belongs to the CobB/CobQ family. CobQ subfamily.

The protein operates within cofactor biosynthesis; adenosylcobalamin biosynthesis. Its function is as follows. Catalyzes amidations at positions B, D, E, and G on adenosylcobyrinic A,C-diamide. NH(2) groups are provided by glutamine, and one molecule of ATP is hydrogenolyzed for each amidation. This chain is Cobyric acid synthase, found in Streptococcus sanguinis (strain SK36).